Reading from the N-terminus, the 875-residue chain is GATOR2 complex protein MIOS (875 aa).

WD repeat units lie at residues 58–100, 111–155, 182–221, 223–261, 265–306, 320–360, and 395–437; these read SDTP…NSKF, KHAR…TPDI, GQND…QKMF, NTKA…KPVL, EQPK…TPIG, PCDN…SLAW, and RLRA…KQYT. The C4-type zinc-finger motif lies at 735-781; it reads VSCNFCGKSISYSCSSVPHQGRGFSQYGVSGSPTKSKVTSCPGCRKP. The Zn(2+) site is built by cysteine 737 and cysteine 740. Serine 759 and serine 766 each carry phosphoserine. Zn(2+) is bound by residues cysteine 775, cysteine 778, cysteine 788, cysteine 827, cysteine 830, histidine 832, histidine 835, histidine 838, cysteine 849, cysteine 854, and cysteine 858. The segment at 782–863 adopts an RING-type; atypical zinc-finger fold; it reads LPRCALCLIN…CTCKCMQLDT (82 aa).

This sequence belongs to the WD repeat mio family. Component of the GATOR2 subcomplex, composed of MIOS, SEC13, SEH1L, WDR24 and WDR59. The GATOR2 complex interacts with CASTOR1 and CASTOR2; the interaction is negatively regulated by arginine. CASTOR1 and CASTOR2 convey leucine availability via direct interaction with MIOS. The GATOR2 complex interacts with SESN1, SESN2 and SESN3; the interaction is negatively regulated by amino acids. Interacts with SAR1A and SAR1B; the interaction is direct, disrupted by leucine and mediates the interaction of SAR1A or SAR1B with the GATOR2 complex to negatively regulate the TORC1 signaling upon leucine deprivation. Widely expressed. In brain, expressed in neurons and glia (oligodendrocytes and astrocytes), with more abundance in neurons.

It is found in the lysosome membrane. The GATOR2 complex is negatively regulated by the upstream amino acid sensors CASTOR1 and SESN2, which sequester the GATOR2 complex in absence of amino acids. In the presence of abundant amino acids, GATOR2 is released from CASTOR1 and SESN2 and activated. Its function is as follows. As a component of the GATOR2 complex, functions as an activator of the amino acid-sensing branch of the mTORC1 signaling pathway. The GATOR2 complex indirectly activates mTORC1 through the inhibition of the GATOR1 subcomplex. GATOR2 probably acts as an E3 ubiquitin-protein ligase toward GATOR1. In the presence of abundant amino acids, the GATOR2 complex mediates ubiquitination of the NPRL2 core component of the GATOR1 complex, leading to GATOR1 inactivation. In the absence of amino acids, GATOR2 is inhibited, activating the GATOR1 complex. Within the GATOR2 complex, MIOS is required to prevent autoubiquitination of WDR24, the catalytic subunit of the complex. The GATOR2 complex is required for brain myelination. The polypeptide is GATOR2 complex protein MIOS (Mus musculus (Mouse)).